A 462-amino-acid polypeptide reads, in one-letter code: Probable Xaa-Pro aminopeptidase NECHADRAFT_60613 (462 aa).

Residues Asp259, Asp270, Glu393, and Glu433 each coordinate Mn(2+).

This sequence belongs to the peptidase M24B family. Requires Mn(2+) as cofactor.

The enzyme catalyses Release of any N-terminal amino acid, including proline, that is linked to proline, even from a dipeptide or tripeptide.. In terms of biological role, catalyzes the removal of a penultimate prolyl residue from the N-termini of peptides. In Fusarium vanettenii (strain ATCC MYA-4622 / CBS 123669 / FGSC 9596 / NRRL 45880 / 77-13-4) (Fusarium solani subsp. pisi), this protein is Probable Xaa-Pro aminopeptidase NECHADRAFT_60613.